Consider the following 100-residue polypeptide: Large ribosomal subunit protein uL23 (100 aa).

The protein belongs to the universal ribosomal protein uL23 family. In terms of assembly, part of the 50S ribosomal subunit. Contacts protein L29, and trigger factor when it is bound to the ribosome.

In terms of biological role, one of the early assembly proteins it binds 23S rRNA. One of the proteins that surrounds the polypeptide exit tunnel on the outside of the ribosome. Forms the main docking site for trigger factor binding to the ribosome. This is Large ribosomal subunit protein uL23 from Synechococcus sp. (strain WH7803).